The following is a 244-amino-acid chain: Troponin I, cardiac muscle (244 aa).

A compositionally biased stretch (acidic residues) spans 1 to 25 (MSDEEEVTYEEEEEEYVEEEEEEVV). Positions 1–67 (MSDEEEVTYE…PQVKRKPKIS (67 aa)) are disordered. Serine 2 carries the N-acetylserine modification. Serine 2 carries the post-translational modification Phosphoserine; by CK2. Residues 27–42 (PEPPKPAPPPAAPPPL) are compositionally biased toward pro residues.

This sequence belongs to the troponin I family. As to quaternary structure, binds to actin and tropomyosin. In terms of tissue distribution, heart.

Its function is as follows. Troponin I is the inhibitory subunit of troponin, the thin filament regulatory complex which confers calcium-sensitivity to striated muscle actomyosin ATPase activity. This chain is Troponin I, cardiac muscle (tnni3), found in Xenopus laevis (African clawed frog).